Here is a 439-residue protein sequence, read N- to C-terminus: MTAELRNLPHIASMAFNEPLMLEPAYARVFFCALAGQLGISSLTDAVSGDSLTAQEALATLALSGDDDGPRQARSYQVMNGIAVLPVSGTLVSRTRALQPYSGMTGYNGIIARLQQAASDPMVDGILLDMDTPGGMVAGAFDCADIIARVRDIKPVWALANDMNCSAGQLLASAASRRLVTQTARTGSIGVMMAHSNYGAALEKQGVEITLIYSGSHKVDGNPYSHLPDDVRETLQSRMDATRQMFAQKVSAYTGLSVQVVLDTEAAVYSGQEAIDAGLADELVNSTDAITVMRDALDARKSRLSGGRMTKETQSTTVSATASQADVTDVVPATEGENASAAQPDVNAQITAAVAAENSRIMGILNCEEAHGREEQARVLAETPGMTVKTARRILAAAPQSAQARSDTALDRLMQGAPAPLAAGNPASDAVNDLLNTPV.

Residue Ser-166 is the Nucleophile of the active site. The tract at residues 303–327 (RLSGGRMTKETQSTTVSATASQADV) is disordered. The segment covering 313-327 (TQSTTVSATASQADV) has biased composition (low complexity).

It belongs to the peptidase S49 family. In terms of assembly, capsid assembly protease interacts with capsid scaffolding protein Nu3. Capsid scaffolding protein Nu3 multimerizes and interacts with major capsid protein gpE.

Its subcellular location is the virion. The protein localises to the host cytoplasm. In terms of biological role, assembly protease promotes icosahedral procapsid assembly. Autocatalytic cleavage may release the capsid scaffolding protein. The protease domain catalyzes the cleavage of the capsid scaffolding protein after complete procapsid formation. Assembly protease and cleavages products are evicted from the capsid before or during DNA packaging. Its function is as follows. Scaffolding protein Nu3 promotes icosahedral procapsid assembly. Acts by binding the major capsid protein gpE and multimerizing in interaction with portal dodecamer, thereby placing gpE in a context facilitating icosahedral procapsid formation. Cleaved by capsid assembly protease C after capsid completion. The cleavages products are evicted from the capsid before or during DNA packaging. The chain is Capsid assembly protease C (C) from Escherichia phage lambda (Bacteriophage lambda).